A 405-amino-acid polypeptide reads, in one-letter code: MERWPWPSGGAWLLVAARALLQLLRSDLRLGRPLLAALALLAALDWLCQRLLPPPAALAVLAAAGWIALSRLARPQRLPVATRAVLITGCDSGFGKETAKKLDSMGFTVLATVLELNSPGAIELRTCCSPRLRLLQMDLTKPGDISRVLEFTKAHTTSTGLWGLVNNAGHNEVVADAELSPVATFRSCMEVNFFGALELTKGLLPLLRSSRGRIVTVGSPAGDMPYPCLGAYGTSKAAVALLMDTFSCELLPWGVKVSIIQPGCFKTESVRNVGQWEKRKQLLLANLPQELLQAYGKDYIEHLHGQFLHSLRLAMSDLTPVVDAITDALLAARPRRRYYPGQGLGLMYFIHYYLPEGLRRRFLQAFFISHCLPRALQPGQPGTTPPQDAAQDPNLSPGPSPAVAR.

Position 82-111 (82-111) interacts with NAD(+); sequence TRAVLITGCDSGFGKETAKKLDSMGFTVLA. Ser219 contacts substrate. Tyr232 serves as the catalytic Proton acceptor. The segment at 335-339 is essential for protein stability; sequence RRRYY. Residues 377 to 387 show a composition bias toward low complexity; the sequence is QPGQPGTTPPQ. Residues 377 to 405 form a disordered region; sequence QPGQPGTTPPQDAAQDPNLSPGPSPAVAR. Pro residues predominate over residues 396-405; sequence SPGPSPAVAR.

This sequence belongs to the short-chain dehydrogenases/reductases (SDR) family. As to quaternary structure, interacts with ligand-free cytoplasmic NR3C2. As to expression, expressed in kidney, placenta, pancreas, prostate, ovary, small intestine and colon, and in lower levels in the spleen and testis. At midgestation, expressed at high levels in placenta and in fetal kidney and, at much lower levels, in fetal lung and testis.

Its subcellular location is the microsome. It localises to the endoplasmic reticulum. The catalysed reaction is an 11beta-hydroxysteroid + NAD(+) = an 11-oxosteroid + NADH + H(+). It carries out the reaction cortisol + NAD(+) = cortisone + NADH + H(+). The enzyme catalyses corticosterone + NAD(+) = 11-dehydrocorticosterone + NADH + H(+). It catalyses the reaction 11beta,17beta-dihydroxyandrost-4-ene-3-one + NAD(+) = 17beta-hydroxyandrost-4-ene-3,11-dione + NADH + H(+). The catalysed reaction is 11beta-hydroxyandrost-4-ene-3,17-dione + NAD(+) = androst-4-ene-3,11,17-trione + NADH + H(+). It participates in steroid metabolism. Its activity is regulated as follows. Inhibited by glycyrrhetinic acid (derived from liquorice). In terms of biological role, catalyzes the conversion of biologically active 11beta-hydroxyglucocorticoids (11beta-hydroxysteroid) such as cortisol, to inactive 11-ketoglucocorticoids (11-oxosteroid) such as cortisone, in the presence of NAD(+). Functions as a dehydrogenase (oxidase), thereby decreasing the concentration of active glucocorticoids, thus protecting the nonselective mineralocorticoid receptor from occupation by glucocorticoids. Plays an important role in maintaining glucocorticoids balance during preimplantation and protects the fetus from excessive maternal corticosterone exposure. Catalyzes the oxidation of 11beta-hydroxytestosterone (11beta,17beta-dihydroxyandrost-4-ene-3-one) to 11-ketotestosterone (17beta-hydroxyandrost-4-ene-3,11-dione), a major bioactive androgen. Catalyzes the conversion of 11beta-hydroxyandrostenedione (11beta-hydroxyandrost-4-ene-3,17-dione) to 11-ketoandrostenedione (androst-4-ene-3,11,17-trione), which can be further metabolized to 11-ketotestosterone. Converts 7-beta-25-dihydroxycholesterol to 7-oxo-25-hydroxycholesterol in vitro. 7-beta-25-dihydroxycholesterol (not 7-oxo-25-hydroxycholesterol) acts as a ligand for the G-protein-coupled receptor (GPCR) Epstein-Barr virus-induced gene 2 (EBI2) and may thereby regulate immune cell migration. May protect ovulating oocytes and fertilizing spermatozoa from the adverse effects of cortisol. The polypeptide is 11-beta-hydroxysteroid dehydrogenase type 2 (Homo sapiens (Human)).